The primary structure comprises 203 residues: uncharacterized protein (203 aa).

Residues 174 to 203 are disordered; the sequence is LASSKNPRARSPGLDPLGSSETLWSHRGGH.

This is an uncharacterized protein from Homo sapiens (Human).